The sequence spans 671 residues: Putative glycoside hydrolase BT_3595 (671 aa).

Positions 1–24 are cleaved as a signal peptide; that stretch reads MITGIISILCYLQCFGTLSASVTA.

It belongs to the glycoside hydrolase-like 3 (GHL3) family.

In Bacteroides thetaiotaomicron (strain ATCC 29148 / DSM 2079 / JCM 5827 / CCUG 10774 / NCTC 10582 / VPI-5482 / E50), this protein is Putative glycoside hydrolase BT_3595.